The sequence spans 95 residues: Pyruvate dehydrogenase inhibitor (95 aa).

This sequence belongs to the HesB/IscA family. In terms of assembly, interacts with the E1 module of pyruvate dehydrogenase (PdhA-PdhB).

Functionally, acts as an inhibitor of the pyruvate dehydrogenase. Overexpression does not affect growth with glucose as the main carbon source, but it leads to a dramatic growth defect when cells are grown with pyruvate as the sole carbon source. The polypeptide is Pyruvate dehydrogenase inhibitor (Bacillus subtilis (strain 168)).